A 1300-amino-acid polypeptide reads, in one-letter code: Histone-lysine N-methyltransferase Suv4-20 (1300 aa).

The disordered stretch occupies residues 1–136 (MVVGSNHTRR…GSGSVVSGLN (136 aa)). A compositionally biased stretch (low complexity) spans 14–62 (GSRFTNSSSSSSTSGGPTASASSTTSVTSSLATNSTSTSTAAALLSSMS). Positions 79 to 97 (QTNQQHHQVAHSQPHATHY) are enriched in polar residues. Residues 116-128 (GSGGGSAGSGSGS) show a composition bias toward gly residues. Positions 255–366 (EACYRYTLEE…VGEEITCFYG (112 aa)) constitute an SET domain. 5 disordered regions span residues 432–490 (SRAN…GKEA), 535–574 (QQHHHQHHFHHHHHHHHHHHNHGQHASTGAEATAAVQQMA), 669–744 (HQSQ…SAGR), 756–856 (NNNI…TQGI), and 891–927 (ALGGFPTGSTGSQRKRAQAGEPTTSCSSTTISNVEPL). The segment covering 435–451 (NSTNSTSNSNSNTNDST) has biased composition (low complexity). Over residues 452-462 (GPSETSSTNGL) the composition is skewed to polar residues. The segment covering 536 to 557 (QHHHQHHFHHHHHHHHHHHNHG) has biased composition (basic residues). Residues 564–574 (AEATAAVQQMA) are compositionally biased toward low complexity. 3 stretches are compositionally biased toward basic and acidic residues: residues 677-688 (RRSERQKEKLTD), 698-707 (QQKKEQKQQD), and 722-735 (QPEKSEEKQQEQQK). A compositionally biased stretch (low complexity) spans 756 to 821 (NNNIATTTNS…SSIPSSTSSE (66 aa)). 2 stretches are compositionally biased toward polar residues: residues 822-834 (NQQQQATRRSCSP) and 911-923 (EPTTSCSSTTISN). S831 and S833 each carry phosphoserine. Phosphothreonine is present on T930. Disordered stretches follow at residues 956-988 (SLSNGGAGRGAPGSHREGTAGEGSVRSALNLTG), 1006-1188 (EHGN…PNGK), 1212-1233 (SPGQGQAIVSSSSGSSGGGGSG), and 1263-1300 (QISQQKTSSGGGAGVVPTSTSTGAVTSHHHTNNHHGQK). The span at 1009-1029 (NDDDEDEEEDDEEPAAEEEEE) shows a compositional bias: acidic residues. Residues 1041–1055 (KKQRKKQRSRSRSSQ) are compositionally biased toward basic residues. Composition is skewed to low complexity over residues 1117–1145 (ASSTSLTVNTSSSSTSSSSGVGGATSTSA) and 1161–1178 (SPSSTTSSSFQSACTSTT). Residues 1289 to 1300 (SHHHTNNHHGQK) are compositionally biased toward basic residues.

Belongs to the class V-like SAM-binding methyltransferase superfamily. Histone-lysine methyltransferase family. Suvar4-20 subfamily.

Its subcellular location is the nucleus. It is found in the chromosome. The enzyme catalyses L-lysyl(20)-[histone H4] + S-adenosyl-L-methionine = N(6)-methyl-L-lysyl(20)-[histone H4] + S-adenosyl-L-homocysteine + H(+). The catalysed reaction is N(6)-methyl-L-lysyl(20)-[histone H4] + S-adenosyl-L-methionine = N(6),N(6)-dimethyl-L-lysyl(20)-[histone H4] + S-adenosyl-L-homocysteine + H(+). It carries out the reaction N(6),N(6)-dimethyl-L-lysyl(20)-[histone H4] + S-adenosyl-L-methionine = N(6),N(6),N(6)-trimethyl-L-lysyl(20)-[histone H4] + S-adenosyl-L-homocysteine + H(+). Functionally, histone methyltransferase that specifically trimethylates 'Lys-20' of histone H4. H4 'Lys-20' trimethylation represents a specific tag for epigenetic transcriptional repression. Mainly functions in pericentric heterochromatin regions, thereby playing a central role in the establishment of constitutive heterochromatin in these regions. Acts as a dominant suppressor of position-effect variegation. The sequence is that of Histone-lysine N-methyltransferase Suv4-20 (Hmt4-20) from Drosophila melanogaster (Fruit fly).